The following is a 122-amino-acid chain: Large ribosomal subunit protein uL14 (122 aa).

The protein belongs to the universal ribosomal protein uL14 family. Part of the 50S ribosomal subunit. Forms a cluster with proteins L3 and L19. In the 70S ribosome, L14 and L19 interact and together make contacts with the 16S rRNA in bridges B5 and B8.

In terms of biological role, binds to 23S rRNA. Forms part of two intersubunit bridges in the 70S ribosome. The chain is Large ribosomal subunit protein uL14 from Thermus aquaticus.